The chain runs to 271 residues: Regulatory protein RecX (271 aa).

Belongs to the RecX family.

The protein localises to the cytoplasm. In terms of biological role, modulates RecA activity. This Lactobacillus johnsonii (strain CNCM I-12250 / La1 / NCC 533) protein is Regulatory protein RecX.